Here is a 562-residue protein sequence, read N- to C-terminus: Protein wntless (562 aa).

At M1–K13 the chain is on the cytoplasmic side. The chain crosses the membrane as a helical span at residues L14–L34. Over Y35–Q239 the chain is Lumenal. A glycan (N-linked (GlcNAc...) asparagine) is linked at N58. Residues I240–W260 traverse the membrane as a helical segment. At R261–P270 the chain is on the cytoplasmic side. A helical transmembrane segment spans residues A271–L291. The Lumenal segment spans residues E292–Q311. A helical transmembrane segment spans residues G312 to I332. The Cytoplasmic segment spans residues Q333–R344. A helical membrane pass occupies residues Y345–C365. Topologically, residues E366 to T390 are lumenal. Residues F391–W411 traverse the membrane as a helical segment. Residues K412–R441 are Cytoplasmic-facing. Residues F442 to M462 form a helical membrane-spanning segment. Residues G463–S482 are Lumenal-facing. A helical membrane pass occupies residues A483 to Y503. Residues A504–D562 lie on the Cytoplasmic side of the membrane. The tract at residues H539 to D562 is disordered. A compositionally biased stretch (polar residues) spans P541–T556.

The protein belongs to the wntless family. As to quaternary structure, interacts with wg; in the Golgi. Interacts with Vps35, a component of the retromer complex; wls stability is regulated by Vps35.

It is found in the presynaptic cell membrane. It localises to the postsynaptic cell membrane. The protein localises to the cell membrane. The protein resides in the endoplasmic reticulum membrane. Its subcellular location is the endosome membrane. It is found in the golgi apparatus membrane. Its function is as follows. A segment polarity gene required for wingless (wg)-dependent patterning processes, acting in both wg-sending cells and wg-target cells. In non-neuronal cells wls directs wg secretion. The wls traffic loop encompasses the Golgi, the cell surface, an endocytic compartment and a retrograde route leading back to the Golgi, and involves clathrin-mediated endocytosis and the retromer complex (a conserved protein complex consisting of Vps35 and Vps26). In neuronal cells (the larval motorneuron NMJ), the wg signal moves across the synapse via the release of wls-containing exosome-like vesicles. Postsynaptic wls is required for the trafficking of fz2 through the fz2-interacting protein Grip. The polypeptide is Protein wntless (Drosophila erecta (Fruit fly)).